Reading from the N-terminus, the 436-residue chain is GTPase Der (436 aa).

EngA-type G domains lie at P4–E167 and I175–N351. Residues G10–S17, D57–I61, N119–D122, G181–S188, D229–M233, and N294–D297 contribute to the GTP site. The region spanning K352–K436 is the KH-like domain.

Belongs to the TRAFAC class TrmE-Era-EngA-EngB-Septin-like GTPase superfamily. EngA (Der) GTPase family. Associates with the 50S ribosomal subunit.

GTPase that plays an essential role in the late steps of ribosome biogenesis. The sequence is that of GTPase Der from Streptococcus uberis (strain ATCC BAA-854 / 0140J).